The primary structure comprises 198 residues: Ras-related protein RabH (198 aa).

14-21 (GDWNVGKS) provides a ligand contact to GTP. The short motif at 36 to 44 (TKLSMGEHF) is the Effector region element. GTP-binding positions include 62 to 66 (DTSGM) and 120 to 123 (SKFD). C195 carries the post-translational modification Cysteine methyl ester. C195 carries the S-geranylgeranyl cysteine lipid modification. A propeptide spans 196 to 198 (SIN) (removed in mature form).

It belongs to the small GTPase superfamily. Rab family.

The protein localises to the cell membrane. The polypeptide is Ras-related protein RabH (rabH) (Dictyostelium discoideum (Social amoeba)).